Consider the following 439-residue polypeptide: Ribosomal protein uS12 methylthiotransferase RimO (439 aa).

The 111-residue stretch at 4-114 (PKVGFVSLGR…VVRAVHGVAP (111 aa)) folds into the MTTase N-terminal domain. The Radical SAM core domain maps to 133–370 (LTPRHYAYLK…MEHQQAISTA (238 aa)). Cysteine 147, cysteine 151, and cysteine 154 together coordinate [4Fe-4S] cluster. The TRAM domain occupies 373–439 (STRVGREIDV…EYDLWGERIA (67 aa)).

It belongs to the methylthiotransferase family. RimO subfamily. [4Fe-4S] cluster serves as cofactor.

It is found in the cytoplasm. It carries out the reaction L-aspartate(89)-[ribosomal protein uS12]-hydrogen + (sulfur carrier)-SH + AH2 + 2 S-adenosyl-L-methionine = 3-methylsulfanyl-L-aspartate(89)-[ribosomal protein uS12]-hydrogen + (sulfur carrier)-H + 5'-deoxyadenosine + L-methionine + A + S-adenosyl-L-homocysteine + 2 H(+). Functionally, catalyzes the methylthiolation of an aspartic acid residue of ribosomal protein uS12. The polypeptide is Ribosomal protein uS12 methylthiotransferase RimO (Bordetella bronchiseptica (strain ATCC BAA-588 / NCTC 13252 / RB50) (Alcaligenes bronchisepticus)).